Consider the following 488-residue polypeptide: uncharacterized protein (488 aa).

It belongs to the protein kinase superfamily. ADCK protein kinase family.

This is an uncharacterized protein from Mycobacterium tuberculosis (strain CDC 1551 / Oshkosh).